The following is an 806-amino-acid chain: Facilitated trehalose transporter Tret1 (806 aa).

Disordered stretches follow at residues 1–34 and 48–138; these read MFGN…TTGT and LNST…HKNQ. Residues 1–339 are Cytoplasmic-facing; that stretch reads MFGNEMDDTR…LEVYRPTTNP (339 aa). Low complexity predominate over residues 25 to 34; that stretch reads GSLSTSTTGT. The chain crosses the membrane as a helical span at residues 340-360; sequence IFIWTQVLAALSVSLGSMVVG. Over 361-389 the chain is Extracellular; that stretch reads FSSAYTSPALVSMKDRNITSFEVTDQSGS. An N-linked (GlcNAc...) asparagine glycan is attached at Asn-377. The helical transmembrane segment at 390-410 threads the bilayer; the sequence is WVGGIMPLAGLAGGILGGPLI. The Cytoplasmic portion of the chain corresponds to 411–424; it reads EYLGRKNTILATAT. The chain crosses the membrane as a helical span at residues 425-445; the sequence is PFIISWLLIACATHVAMVLVG. Residues 446–447 lie on the Extracellular side of the membrane; that stretch reads RA. A helical membrane pass occupies residues 448-468; sequence LSGFSVGVASLSLPVYLGETV. The Cytoplasmic portion of the chain corresponds to 469–473; the sequence is QPEVR. Residues 474–494 traverse the membrane as a helical segment; it reads GTLGLLPTAFGNIGILLCFVA. The Extracellular portion of the chain corresponds to 495–501; it reads GKYMDWS. A helical membrane pass occupies residues 502–522; that stretch reads GLAFLGAALPIPFLLLMFLIP. At 523 to 585 the chain is on the cytoplasmic side; the sequence is ETPRWYVSRG…DLMKKANLKP (63 aa). The helical transmembrane segment at 586-606 threads the bilayer; sequence LLISLGLMFFQQLSGINAVIF. The Extracellular segment spans residues 607–622; it reads YTVQIFQDAGSTIDEN. The chain crosses the membrane as a helical span at residues 623-643; it reads LCTIIVGVVNFIATFIATMLI. The Cytoplasmic segment spans residues 644-649; sequence DRLGRK. The helical transmembrane segment at 650–670 threads the bilayer; sequence MLLYISDVAMIITLMTLGGFF. The Extracellular portion of the chain corresponds to 671 to 681; that stretch reads YVKNSGQDVSQ. Residues 682 to 702 form a helical membrane-spanning segment; that stretch reads VGWLPLAAFVIYVLGFSLGFG. Topologically, residues 703–723 are cytoplasmic; the sequence is PIPWLMMGEILPGKIRGSAAS. The chain crosses the membrane as a helical span at residues 724–744; it reads VATAFNWSCTFIVTKTFADII. Topologically, residues 745–750 are extracellular; sequence NAIGTH. The helical transmembrane segment at 751 to 771 threads the bilayer; sequence GTFWMFGSICVIGLAFVIFYV. Topologically, residues 772 to 806 are cytoplasmic; the sequence is PETQGKSLEDIERKMMGRVRRMSSVANIKPLSFNM.

Belongs to the major facilitator superfamily. Sugar transporter (TC 2.A.1.1) family. Trehalose transporter subfamily.

Its subcellular location is the cell membrane. Functionally, high-capacity facilitative transporter for trehalose. Does not transport maltose, sucrose or lactose. Mediates the bidirectional transfer of trehalose. Responsible for the transport of trehalose synthesized in the fat body and the incorporation of trehalose into other tissues that require a carbon source, thereby regulating trehalose levels in the hemolymph. In Aedes aegypti (Yellowfever mosquito), this protein is Facilitated trehalose transporter Tret1.